The primary structure comprises 113 residues: U11-theraphotoxin-Hhn1d (113 aa).

Positions 1-21 (MNTVRVTFLLVFVVAVSLGQA) are cleaved as a signal peptide. Residues 22–74 (DKDENRMEMKDKTEQGKSYLHFAENLLLQKLEDVEAKLLEKDSEKSINSRQKR) constitute a propeptide that is removed on maturation. Intrachain disulfides connect C75/C90, C82/C95, and C89/C110.

The protein belongs to the neurotoxin 14 (magi-1) family. 01 (HNTX-16) subfamily. In terms of tissue distribution, expressed by the venom gland.

Its subcellular location is the secreted. Functionally, probable ion channel inhibitor. The chain is U11-theraphotoxin-Hhn1d from Cyriopagopus hainanus (Chinese bird spider).